Here is a 248-residue protein sequence, read N- to C-terminus: Ribonuclease PH (248 aa).

Phosphate is bound by residues arginine 86 and 124 to 126; that span reads GTR.

Belongs to the RNase PH family. Homohexameric ring arranged as a trimer of dimers.

It catalyses the reaction tRNA(n+1) + phosphate = tRNA(n) + a ribonucleoside 5'-diphosphate. Its function is as follows. Phosphorolytic 3'-5' exoribonuclease that plays an important role in tRNA 3'-end maturation. Removes nucleotide residues following the 3'-CCA terminus of tRNAs; can also add nucleotides to the ends of RNA molecules by using nucleoside diphosphates as substrates, but this may not be physiologically important. Probably plays a role in initiation of 16S rRNA degradation (leading to ribosome degradation) during starvation. The chain is Ribonuclease PH from Clostridium perfringens (strain SM101 / Type A).